The following is a 224-amino-acid chain: uncharacterized protein (224 aa).

N-linked (GlcNAc...) asparagine glycans are attached at residues N10, N70, and N74.

It localises to the endoplasmic reticulum. This is an uncharacterized protein from Saccharomyces cerevisiae (strain ATCC 204508 / S288c) (Baker's yeast).